A 155-amino-acid polypeptide reads, in one-letter code: NADH-ubiquinone oxidoreductase chain 6 (155 aa).

Transmembrane regions (helical) follow at residues 1–21, 42–62, 71–91, and 121–141; these read MLGS…PLAF, WISL…FIYV, FAVD…SFLV, and LTML…LLVI.

This sequence belongs to the complex I subunit 6 family.

It is found in the mitochondrion membrane. It catalyses the reaction a ubiquinone + NADH + 5 H(+)(in) = a ubiquinol + NAD(+) + 4 H(+)(out). Functionally, core subunit of the mitochondrial membrane respiratory chain NADH dehydrogenase (Complex I) that is believed to belong to the minimal assembly required for catalysis. Complex I functions in the transfer of electrons from NADH to the respiratory chain. The immediate electron acceptor for the enzyme is believed to be ubiquinone. The protein is NADH-ubiquinone oxidoreductase chain 6 (ND6) of Artemia franciscana (Brine shrimp).